The following is a 164-amino-acid chain: T-cell surface glycoprotein CD3 zeta chain (164 aa).

The N-terminal stretch at 1-21 is a signal peptide; the sequence is MKWKVSVLACILHVRFPGAEA. The residue at position 22 (Q22) is a Blocked amino end (Gln). Residues 22–30 are Extracellular-facing; it reads QSFGLLDPK. The helical transmembrane segment at 31–51 threads the bilayer; the sequence is LCYLLDGILFIYGVIITALYL. Over 52–164 the chain is Cytoplasmic; sequence RAKFSRSAET…ALHMQTLAPR (113 aa). S58 carries the phosphoserine modification. ITAM domains are found at residues 61–89, 100–128, and 131–159; these read TAANLQDPNQLYNELNLGRREEYDVLEKK, QQRRRNPQEGVYNALQKDKMAEAYSEIGT, and ERRRGKGHDGLYQGLSTATKDTYDALHMQ. Y72 and Y83 each carry phosphotyrosine. Positions 87 to 96 are enriched in basic and acidic residues; the sequence is EKKRARDPEM. The disordered stretch occupies residues 87-111; the sequence is EKKRARDPEMGGKQQRRRNPQEGVY. 4 positions are modified to phosphotyrosine: Y111, Y123, Y142, and Y153. The interval 124-143 is disordered; sequence SEIGTKGERRRGKGHDGLYQ.

The protein belongs to the CD3Z/FCER1G family. In terms of assembly, the TCR-CD3 complex is composed of a CD3D/CD3E and a CD3G/CD3E heterodimers that preferentially associate with TCRalpha and TCRbeta, respectively, to form TCRalpha/CD3E/CD3G and TCRbeta/CD3G/CD3E trimers. In turn, the hexamer interacts with CD3Z homodimer to form the TCR-CD3 complex. Alternatively, TCRalpha and TCRbeta can be replaced by TCRgamma and TCRdelta. Interacts with SLA. Interacts with SLA2. Interacts with TRAT1. Interacts with DOCK2. Interacts with SHB. Interacts with ZAP70. Interacts (tyrosine phosphorylated) with SHC1 (via SH2 domain). Interacts with PTPRC. Interacts with CRK; this interaction regulates CD3Z phosphorylation. Interacts (on T cell side) with CD81, ICAM1 and CD9 at immunological synapses between antigen-presenting cells and T cells. Interacts with CD160. Interacts with LY6E. Interacts with LY6E. The signaling subunit of immunoglobulin gamma (IgG) Fc receptor complex. As a homodimer or a heterodimer with FCER1G, associates with the ligand binding subunit FCGR3A (via transmembrane domain); this interaction is a prerequisite for Fc receptor complex expression on the cell surface. Interacts with CD5. Phosphorylated on Tyr residues after T-cell receptor triggering by LCK in association with CD4/CD8. CD3Z is expressed in normal lymphoid tissue and in peripheral blood mononuclear cells (PBMCs). Expressed also in retinal ganglion cells.

It is found in the cell membrane. In terms of biological role, part of the TCR-CD3 complex present on T-lymphocyte cell surface that plays an essential role in adaptive immune response. When antigen presenting cells (APCs) activate T-cell receptor (TCR), TCR-mediated signals are transmitted across the cell membrane by the CD3 chains CD3D, CD3E, CD3G and CD3Z. All CD3 chains contain immunoreceptor tyrosine-based activation motifs (ITAMs) in their cytoplasmic domain. Upon TCR engagement, these motifs become phosphorylated by Src family protein tyrosine kinases LCK and FYN, resulting in the activation of downstream signaling pathways. CD3Z ITAMs phosphorylation creates multiple docking sites for the protein kinase ZAP70 leading to ZAP70 phosphorylation and its conversion into a catalytically active enzyme. Plays an important role in intrathymic T-cell differentiation. Additionally, participates in the activity-dependent synapse formation of retinal ganglion cells (RGCs) in both the retina and dorsal lateral geniculate nucleus (dLGN). The polypeptide is T-cell surface glycoprotein CD3 zeta chain (Cd247) (Mus musculus (Mouse)).